The primary structure comprises 225 residues: Phosphoglycolate phosphatase (225 aa).

The active-site Nucleophile is the Asp11. Residues Asp11 and Asp13 each contribute to the Mg(2+) site. A substrate-binding site is contributed by Lys153. 2 residues coordinate Mg(2+): Asp176 and Asp180.

This sequence belongs to the archaeal SPP-like hydrolase family. It depends on Mg(2+) as a cofactor.

It catalyses the reaction 2-phosphoglycolate + H2O = glycolate + phosphate. Functionally, catalyzes the dephosphorylation of 2-phosphoglycolate. The sequence is that of Phosphoglycolate phosphatase from Halobacterium salinarum (strain ATCC 29341 / DSM 671 / R1).